The sequence spans 186 residues: Holliday junction branch migration complex subunit RuvA (186 aa).

Residues 1 to 63 (MNDYINGFLY…DNHFKYYGFF (63 aa)) form a domain I region. Residues 64-137 (NQLVRDLFEI…QKELFNNKIS (74 aa)) form a domain II region. Ser-137 is a region of interest (flexible linker). The domain III stretch occupies residues 137–186 (SEKKNKVITSLEKLGYKTKDIYKIIINVDEDLTIDELTKYVLEKLSYINN).

It belongs to the RuvA family. As to quaternary structure, homotetramer. Forms an RuvA(8)-RuvB(12)-Holliday junction (HJ) complex. HJ DNA is sandwiched between 2 RuvA tetramers; dsDNA enters through RuvA and exits via RuvB. An RuvB hexamer assembles on each DNA strand where it exits the tetramer. Each RuvB hexamer is contacted by two RuvA subunits (via domain III) on 2 adjacent RuvB subunits; this complex drives branch migration. In the full resolvosome a probable DNA-RuvA(4)-RuvB(12)-RuvC(2) complex forms which resolves the HJ.

It is found in the cytoplasm. In terms of biological role, the RuvA-RuvB-RuvC complex processes Holliday junction (HJ) DNA during genetic recombination and DNA repair, while the RuvA-RuvB complex plays an important role in the rescue of blocked DNA replication forks via replication fork reversal (RFR). RuvA specifically binds to HJ cruciform DNA, conferring on it an open structure. The RuvB hexamer acts as an ATP-dependent pump, pulling dsDNA into and through the RuvAB complex. HJ branch migration allows RuvC to scan DNA until it finds its consensus sequence, where it cleaves and resolves the cruciform DNA. In Mycoplasma capricolum subsp. capricolum (strain California kid / ATCC 27343 / NCTC 10154), this protein is Holliday junction branch migration complex subunit RuvA.